The following is a 320-amino-acid chain: Mitochondrial ribosome-associated GTPase 1 (320 aa).

One can recognise a CP-type G domain in the interval Leu37–Pro209. Residues Asn81–Asp84, Asn153–Ser158, and Gly205 each bind GTP.

It belongs to the TRAFAC class YlqF/YawG GTPase family. MTG1 subfamily.

It localises to the mitochondrion inner membrane. In terms of biological role, plays a role in the regulation of the mitochondrial ribosome assembly and of translational activity. Displays mitochondrial GTPase activity. The chain is Mitochondrial ribosome-associated GTPase 1 from Ictalurus punctatus (Channel catfish).